The chain runs to 446 residues: Mycosin-1 (446 aa).

A signal peptide spans Met-1–Ala-21. A disordered region spans residues Pro-24–Thr-43. A Peptidase S8 domain is found at Pro-64 to Leu-387. Residues Asp-90, His-121, and Ser-332 each act as charge relay system in the active site. Residues Ile-419 to Ala-439 traverse the membrane as a helical segment.

This sequence belongs to the peptidase S8 family.

The protein resides in the cell membrane. In terms of biological role, may play a dual role in regulation of ESX-1 secretion and virulence. Acts as a protease that cleaves EspB. Essential for ESX-1 function, required for early replication in macrophages and full virulence in mice. This is Mycosin-1 from Mycobacterium tuberculosis (strain ATCC 25618 / H37Rv).